The primary structure comprises 273 residues: tRNA pseudouridine synthase B (273 aa).

Aspartate 38 (nucleophile) is an active-site residue.

It belongs to the pseudouridine synthase TruB family. Type 1 subfamily.

The enzyme catalyses uridine(55) in tRNA = pseudouridine(55) in tRNA. Its function is as follows. Responsible for synthesis of pseudouridine from uracil-55 in the psi GC loop of transfer RNAs. This Campylobacter concisus (strain 13826) protein is tRNA pseudouridine synthase B.